A 286-amino-acid chain; its full sequence is 4-diphosphocytidyl-2-C-methyl-D-erythritol kinase (286 aa).

Residue Lys12 is part of the active site. Position 96–106 (96–106) interacts with ATP; sequence PHGAGLGGGSA. Residue Asp138 is part of the active site.

Belongs to the GHMP kinase family. IspE subfamily.

The enzyme catalyses 4-CDP-2-C-methyl-D-erythritol + ATP = 4-CDP-2-C-methyl-D-erythritol 2-phosphate + ADP + H(+). Its pathway is isoprenoid biosynthesis; isopentenyl diphosphate biosynthesis via DXP pathway; isopentenyl diphosphate from 1-deoxy-D-xylulose 5-phosphate: step 3/6. Its function is as follows. Catalyzes the phosphorylation of the position 2 hydroxy group of 4-diphosphocytidyl-2C-methyl-D-erythritol. In Nitratidesulfovibrio vulgaris (strain DP4) (Desulfovibrio vulgaris), this protein is 4-diphosphocytidyl-2-C-methyl-D-erythritol kinase.